The following is a 384-amino-acid chain: Zinc transporter 7 (384 aa).

A signal peptide spans 1 to 25; it reads MERFVQFLRRGNGLMAASLAAGSCA. Residues 26–46 lie on the Extracellular side of the membrane; that stretch reads EEVAKAEGAGCRDDAAALRLK. A helical transmembrane segment spans residues 47–67; the sequence is GVAMATILVAGVVGVGLPLAG. The Cytoplasmic segment spans residues 68–79; the sequence is RKRRALRTDSAA. The chain crosses the membrane as a helical span at residues 80 to 100; it reads FVAAKAFAAGVILATGFVHML. Residues 101–119 lie on the Extracellular side of the membrane; it reads HDAEHALSSPCLPAHPWRS. Residues 120–140 traverse the membrane as a helical segment; the sequence is FPFPGFVAMSAALATLVLDFL. At 141–227 the chain is on the cytoplasmic side; that stretch reads ATRFYEGKHR…GEGEVPAQVR (87 aa). The tract at residues 185–222 is disordered; sequence DNKAPLLQPHSHSHSHPHGHGHGHELAQPEGSGGEGEV. Residues 195–205 show a composition bias toward basic residues; the sequence is SHSHSHPHGHG. The chain crosses the membrane as a helical span at residues 228–248; it reads SVVVSQILEMGIVSHSVIIGL. The Extracellular segment spans residues 249–261; the sequence is SLGVSRSPCTIRP. A helical transmembrane segment spans residues 262 to 282; it reads LVAALSFHQFFEGFALGGCIA. Residues 283 to 291 are Cytoplasmic-facing; that stretch reads QAQFKTLSA. The helical transmembrane segment at 292–312 threads the bilayer; it reads AIMACFFAITTPAGIAAGAGV. Residues 313-323 are Extracellular-facing; sequence ASFYNANSPRA. Residues 324–344 traverse the membrane as a helical segment; that stretch reads LVVEGILDSVSAGILIYMSLV. Over 345–363 the chain is Cytoplasmic; it reads DLIAADFLGGKMTGSTRQQ. A helical transmembrane segment spans residues 364-384; the sequence is VMAYIALFLGALSMSSLAIWA.

This sequence belongs to the ZIP transporter (TC 2.A.5) family.

Its subcellular location is the cell membrane. Functionally, zinc transporter that may be involved in zinc uptake from the rhizosphere. The polypeptide is Zinc transporter 7 (ZIP7) (Oryza sativa subsp. japonica (Rice)).